The following is a 133-amino-acid chain: Protein PsiE homolog (133 aa).

4 helical membrane-spanning segments follow: residues 13–33, 55–75, 81–101, and 105–125; these read LQWI…IFLI, VESI…IKYF, FPLR…IIVS, and PMET…LYIS.

Belongs to the PsiE family.

The protein resides in the cell membrane. This chain is Protein PsiE homolog, found in Bacillus cereus (strain ATCC 10987 / NRS 248).